The primary structure comprises 331 residues: Ribosomal RNA small subunit methyltransferase H (331 aa).

S-adenosyl-L-methionine-binding positions include 49-51 (GGH), Asp68, Leu102, Asp116, and Gln123.

It belongs to the methyltransferase superfamily. RsmH family.

The protein localises to the cytoplasm. The catalysed reaction is cytidine(1402) in 16S rRNA + S-adenosyl-L-methionine = N(4)-methylcytidine(1402) in 16S rRNA + S-adenosyl-L-homocysteine + H(+). In terms of biological role, specifically methylates the N4 position of cytidine in position 1402 (C1402) of 16S rRNA. In Renibacterium salmoninarum (strain ATCC 33209 / DSM 20767 / JCM 11484 / NBRC 15589 / NCIMB 2235), this protein is Ribosomal RNA small subunit methyltransferase H.